The sequence spans 356 residues: Tyrosine recombinase XerS (356 aa).

The Core-binding (CB) domain occupies leucine 16–threonine 121. The region spanning lysine 169 to aspartate 354 is the Tyr recombinase domain. Residues arginine 210, lysine 234, histidine 306, arginine 309, and histidine 332 contribute to the active site. The active-site O-(3'-phospho-DNA)-tyrosine intermediate is tyrosine 341.

Belongs to the 'phage' integrase family. XerS subfamily.

It localises to the cytoplasm. With respect to regulation, ftsK is required for recombination. In terms of biological role, site-specific tyrosine recombinase, which acts by catalyzing the cutting and rejoining of the recombining DNA molecules. Essential to convert dimers of the bacterial chromosome into monomers to permit their segregation at cell division. The protein is Tyrosine recombinase XerS of Streptococcus thermophilus (strain ATCC BAA-491 / LMD-9).